The following is a 104-amino-acid chain: Protein S100-A14 (104 aa).

Residues 27 to 61 (KNFHQYSVEGGKETLTPSELRDLVTQQLPHLMPSN) form the EF-hand domain.

The protein belongs to the S-100 family. In terms of assembly, homodimer. Interacts with AGER.

The protein resides in the cytoplasm. Its function is as follows. Modulates P53/TP53 protein levels, and thereby plays a role in the regulation of cell survival and apoptosis. Depending on the context, it can promote cell proliferation or apoptosis. Plays a role in the regulation of cell migration by modulating the levels of MMP2, a matrix protease that is under transcriptional control of P53/TP53. Does not bind calcium. This chain is Protein S100-A14 (S100A14), found in Bos taurus (Bovine).